A 235-amino-acid chain; its full sequence is Keratin-associated protein 4-16 (235 aa).

Residues 1 to 132 (MCSSKMPCSP…CCCPCCCLRP (132 aa)) form a 16 X 5 AA repeats of C-C-[GIKRQVHEML]-[SPTRV]-[STVQRCP] region. A run of 16 repeats spans residues 23–27 (CCHPS), 28–32 (CCQTT), 33–37 (CCRTT), 48–52 (CCRPQ), 53–57 (CCHSV), 58–62 (CCQPT), 63–67 (CCRPS), 68–72 (CCQTT), 78–82 (CCHPS), 83–87 (CCVSS), 88–92 (CCRPQ), 93–97 (CCHSV), 103–107 (CCHPS), 108–112 (CCISS), 118–122 (CCESS), and 128–132 (CCLRP). Residues 203–224 (SPSPSLPSLSPPLPSPPLPSPH) are compositionally biased toward pro residues. The disordered stretch occupies residues 203–235 (SPSPSLPSLSPPLPSPPLPSPHFPSVNPKSMLQ).

It belongs to the KRTAP type 4 family. In terms of assembly, interacts with hair keratins.

In the hair cortex, hair keratin intermediate filaments are embedded in an interfilamentous matrix, consisting of hair keratin-associated proteins (KRTAP), which are essential for the formation of a rigid and resistant hair shaft through their extensive disulfide bond cross-linking with abundant cysteine residues of hair keratins. The matrix proteins include the high-sulfur and high-glycine-tyrosine keratins. This Homo sapiens (Human) protein is Keratin-associated protein 4-16.